Consider the following 219-residue polypeptide: Protein DCL homolog, chloroplastic (219 aa).

The transit peptide at 1–48 (MSLASIPSSSPVASPYFRCRTYIFSFSSSPLCLYFPRGDSTSLRPRVR) directs the protein to the chloroplast. Residues 70-96 (LRRPRIASEESSEEEEEEEEENSEGDE) form a disordered region. Over residues 79-96 (ESSEEEEEEEEENSEGDE) the composition is skewed to acidic residues.

As to expression, expressed in leaves, stems, flowers and siliques.

It is found in the plastid. It localises to the chloroplast. Its function is as follows. Required for normal plastid function and plant development. Required for correct plastid ribosome assembly. Required for processing and maturation of 4.5S rRNA. The chain is Protein DCL homolog, chloroplastic from Arabidopsis thaliana (Mouse-ear cress).